A 375-amino-acid polypeptide reads, in one-letter code: DNA replication and repair protein RecF (375 aa).

Residue G30–T37 coordinates ATP.

The protein belongs to the RecF family.

The protein localises to the cytoplasm. Functionally, the RecF protein is involved in DNA metabolism; it is required for DNA replication and normal SOS inducibility. RecF binds preferentially to single-stranded, linear DNA. It also seems to bind ATP. The sequence is that of DNA replication and repair protein RecF from Enterococcus faecalis (strain ATCC 700802 / V583).